The chain runs to 1255 residues: Kinesin-related protein 7 (1255 aa).

The segment at methionine 1 to serine 26 is disordered. The region spanning asparagine 28–isoleucine 349 is the Kinesin motor domain. Residue glycine 107–threonine 114 coordinates ATP. Low complexity-rich tracts occupy residues asparagine 454 to asparagine 491, asparagine 545 to glycine 563, and histidine 583 to serine 603. 6 disordered regions span residues asparagine 454–phenylalanine 503, glycine 530–tyrosine 564, aspartate 579–asparagine 628, glutamate 661–threonine 686, glutamate 795–isoleucine 864, and isoleucine 915–lysine 934. Over residues valine 608–asparagine 628 the composition is skewed to polar residues. Over residues glycine 813–glutamate 834 the composition is skewed to acidic residues. Over residues isoleucine 915–serine 932 the composition is skewed to low complexity. The helical transmembrane segment at isoleucine 945–leucine 965 threads the bilayer. Residues asparagine 1088 to leucine 1223 adopt a coiled-coil conformation.

Belongs to the TRAFAC class myosin-kinesin ATPase superfamily. Kinesin family.

The protein resides in the nucleus membrane. Its subcellular location is the cytoplasm. It is found in the cytoskeleton. Microtubule-associated force-producing protein that plays a role in organelle transport. Its motor activity is directed toward the microtubule's plus end. May be involved in cell motility or cell differentiation during prestalk formation. This chain is Kinesin-related protein 7 (kif7), found in Dictyostelium discoideum (Social amoeba).